The primary structure comprises 248 residues: ATP synthase subunit a, chloroplastic (248 aa).

5 consecutive transmembrane segments (helical) span residues 35–55 (GQVF…SFLG), 94–114 (VPYI…GALI), 133–153 (INTT…AGLS), 202–222 (VFTL…GLFA), and 224–244 (SIQA…AMEG).

Belongs to the ATPase A chain family. F-type ATPases have 2 components, CF(1) - the catalytic core - and CF(0) - the membrane proton channel. CF(1) has five subunits: alpha(3), beta(3), gamma(1), delta(1), epsilon(1). CF(0) has four main subunits: a, b, b' and c.

It is found in the plastid. The protein resides in the chloroplast thylakoid membrane. In terms of biological role, key component of the proton channel; it plays a direct role in the translocation of protons across the membrane. In Pyropia yezoensis (Susabi-nori), this protein is ATP synthase subunit a, chloroplastic.